A 473-amino-acid chain; its full sequence is Photosystem II CP43 reaction center protein (473 aa).

The propeptide occupies 1–14; it reads MKTLYSLRRFYPVE. Thr15 is subject to N-acetylthreonine. The residue at position 15 (Thr15) is a Phosphothreonine. 5 consecutive transmembrane segments (helical) span residues 69-93, 134-155, 178-200, 255-275, and 291-312; these read LFEVAHFVPEKPMYEQGLILLPHLA, LLGPETLEESFPFFGYVWKDRN, KALYFGGVYDTWAPGGGDVRKIT, KPFAWARRALVWSGEAYLSYS, and WFNNTAYPSEFYGPTGPEASQA. [CaMn4O5] cluster is bound at residue Glu367. Residues 447 to 471 traverse the membrane as a helical segment; sequence RARAAAAGFEKGIDRDFEPVLSMTP.

It belongs to the PsbB/PsbC family. PsbC subfamily. As to quaternary structure, PSII is composed of 1 copy each of membrane proteins PsbA, PsbB, PsbC, PsbD, PsbE, PsbF, PsbH, PsbI, PsbJ, PsbK, PsbL, PsbM, PsbT, PsbX, PsbY, PsbZ, Psb30/Ycf12, at least 3 peripheral proteins of the oxygen-evolving complex and a large number of cofactors. It forms dimeric complexes. Binds multiple chlorophylls and provides some of the ligands for the Ca-4Mn-5O cluster of the oxygen-evolving complex. It may also provide a ligand for a Cl- that is required for oxygen evolution. PSII binds additional chlorophylls, carotenoids and specific lipids. is required as a cofactor.

Its subcellular location is the plastid. The protein localises to the chloroplast thylakoid membrane. Functionally, one of the components of the core complex of photosystem II (PSII). It binds chlorophyll and helps catalyze the primary light-induced photochemical processes of PSII. PSII is a light-driven water:plastoquinone oxidoreductase, using light energy to abstract electrons from H(2)O, generating O(2) and a proton gradient subsequently used for ATP formation. The sequence is that of Photosystem II CP43 reaction center protein from Panax ginseng (Korean ginseng).